Consider the following 206-residue polypeptide: Small ribosomal subunit protein uS4 (206 aa).

The 63-residue stretch at 96-158 (SRLDNVVYRM…AKGQLRIKGA (63 aa)) folds into the S4 RNA-binding domain.

It belongs to the universal ribosomal protein uS4 family. Part of the 30S ribosomal subunit. Contacts protein S5. The interaction surface between S4 and S5 is involved in control of translational fidelity.

In terms of biological role, one of the primary rRNA binding proteins, it binds directly to 16S rRNA where it nucleates assembly of the body of the 30S subunit. With S5 and S12 plays an important role in translational accuracy. This chain is Small ribosomal subunit protein uS4, found in Coxiella burnetii (strain CbuG_Q212) (Coxiella burnetii (strain Q212)).